A 424-amino-acid chain; its full sequence is Tyrosine--tRNA ligase (424 aa).

Tyr-37 provides a ligand contact to L-tyrosine. Positions 42–51 (PTADSLHLGH) match the 'HIGH' region motif. Residue Lys-144 is modified to N6-acetyllysine. L-tyrosine-binding residues include Tyr-175 and Gln-179. The 'KMSKS' region signature appears at 235 to 239 (KFGKT). ATP is bound at residue Lys-238. The S4 RNA-binding domain occupies 357–414 (ADLMQALVDSELQPSRGQARKTIASNAITINGEKQSDPEYFFKEEDRLFGRFTLLRRG).

The protein belongs to the class-I aminoacyl-tRNA synthetase family. TyrS type 1 subfamily. Homodimer.

It localises to the cytoplasm. The catalysed reaction is tRNA(Tyr) + L-tyrosine + ATP = L-tyrosyl-tRNA(Tyr) + AMP + diphosphate + H(+). Its function is as follows. Catalyzes the attachment of tyrosine to tRNA(Tyr) in a two-step reaction: tyrosine is first activated by ATP to form Tyr-AMP and then transferred to the acceptor end of tRNA(Tyr). This chain is Tyrosine--tRNA ligase, found in Shigella dysenteriae serotype 1 (strain Sd197).